A 418-amino-acid polypeptide reads, in one-letter code: Probable cysteine desulfurase 2 (418 aa).

The residue at position 234 (Lys-234) is an N6-(pyridoxal phosphate)lysine. Cys-374 functions as the Cysteine persulfide intermediate in the catalytic mechanism.

Belongs to the class-V pyridoxal-phosphate-dependent aminotransferase family. Csd subfamily. Requires pyridoxal 5'-phosphate as cofactor.

It carries out the reaction (sulfur carrier)-H + L-cysteine = (sulfur carrier)-SH + L-alanine. Functionally, catalyzes the removal of elemental sulfur and selenium atoms from L-cysteine, L-cystine, L-selenocysteine, and L-selenocystine to produce L-alanine. This is Probable cysteine desulfurase 2 (csd2) from Mycobacterium leprae (strain TN).